Reading from the N-terminus, the 439-residue chain is MDICSRNEKLAIRRPAILVALALLLCSCKSTPPESMVTPPAGSKPPATTQQSSQPMRGIWLATVSRLDWPPVSSVNISNPTSRARVQQQAMIDKLDHLQRLGINTVFFQVKPDGTALWPSKILPWSDLMTGKIGENPGYDPLQFMLDEAHKRGMKVHAWFNPYRVSVNTKPGTIRELNSTLSQQPASVYVQHRDWIRTSGDRFVLDPGIPEVQDWITSIVAEVVSRYPVDGVQFDDYFYTESPGSRLNDNETYRKYGGAFASKADWRRNNTQQLIAKVSHTIKSIKPEVEFGVSPAGVWRNRSHDPLGSDTRGAAAYDESYADTRRWVEQGLLDYIAPQIYWPFSRSAARYDVLAKWWADVVKPTRTRLYIGIAFYKVGEPSKIEPDWMINGGVPELKKQLDLNDALPEISGTILFREDYLNKPQTQQAVSYLQSRWGS.

Positions 1-27 (MDICSRNEKLAIRRPAILVALALLLCS) are cleaved as a signal peptide. The N-palmitoyl cysteine moiety is linked to residue cysteine 28. Residue cysteine 28 is the site of S-diacylglycerol cysteine attachment. The tract at residues 34-54 (ESMVTPPAGSKPPATTQQSSQ) is disordered.

It belongs to the glycosyl hydrolase-like 10 (GHL10) family.

The protein resides in the cell outer membrane. Its function is as follows. Divisome-localized glycosyl hydrolase that cleaves peptide-free (denuded) peptidoglycans. This chain is Glycosyl hydrolase DigH, found in Escherichia coli O6:H1 (strain CFT073 / ATCC 700928 / UPEC).